Reading from the N-terminus, the 95-residue chain is Aspartyl/glutamyl-tRNA(Asn/Gln) amidotransferase subunit C (95 aa).

Belongs to the GatC family. As to quaternary structure, heterotrimer of A, B and C subunits.

The enzyme catalyses L-glutamyl-tRNA(Gln) + L-glutamine + ATP + H2O = L-glutaminyl-tRNA(Gln) + L-glutamate + ADP + phosphate + H(+). It catalyses the reaction L-aspartyl-tRNA(Asn) + L-glutamine + ATP + H2O = L-asparaginyl-tRNA(Asn) + L-glutamate + ADP + phosphate + 2 H(+). In terms of biological role, allows the formation of correctly charged Asn-tRNA(Asn) or Gln-tRNA(Gln) through the transamidation of misacylated Asp-tRNA(Asn) or Glu-tRNA(Gln) in organisms which lack either or both of asparaginyl-tRNA or glutaminyl-tRNA synthetases. The reaction takes place in the presence of glutamine and ATP through an activated phospho-Asp-tRNA(Asn) or phospho-Glu-tRNA(Gln). This Bartonella bacilliformis (strain ATCC 35685 / KC583 / Herrer 020/F12,63) protein is Aspartyl/glutamyl-tRNA(Asn/Gln) amidotransferase subunit C.